We begin with the raw amino-acid sequence, 782 residues long: MRQKTLDVLEFDKIKSLVANETISDLGLEKVNQMMPATNFETVVFQMEETDEIAQIYNKHRLPSLSGLSKVSAFIHRADIGGVLNVSELNLIKRLIQVQNQFKTFYNQLVEEDEGVKYPILDDKMNQLPVLTDLFQQINETCDTYDLYDNASYELQGIRSKISSTNQRIRQNLDRIVKSQANQKKLSDAIVTVRNERNVIPVKAEYRQDFNGIVHDQSASGQTLYIEPSSVVEMNNQISRLRHDEAIEKERILTQLTGYVAADKDALLVAEQVMGQLDFLIAKARCSRSIKGTKPIFKEERTVYLPKAYHPLLNRETVVANTIEFMEDIETVIITGPNTGGKTVTLKTLGLIIVMAQSGLLIPTLDGSQLSVFKNVYCDIGDEQSIEQSLSTFSSHMTNIVEILKNADKHSLVLFDELGAGTDPSEGAALAMSILDHVRKIGSLVMATTHYPELKAYSYNREGVMNASVEFDVDTLSPTYKLLMGVPGRSNAFDISKKLGLSLNIINKAKTMIGTDEKEINEMIESLERNYKRVETQRLELDRLVKEAEQVHDDLSKQYQQFQNYEKSLIEDAKEKANQKIKAATKEADDIIKDLRQLREQKGADVKEHELIDKKKRLDDHYEAKSIKQNVQKQKYDKIVAGDEVKVLSYGQKGEVLEIVNDEEAIVQMGIIKMKLPIEDLEKKQKEKVKPTKMVTRQNRQTIKTELDLRGYRYEDALIELDQYLDQAVLSNYEQVYIIHGKGTGALQKGVQQHLKKHKSVSDFRGGMPSEGGFGVTVATLK.

336 to 343 is an ATP binding site; sequence GPNTGGKT. The Smr domain maps to 707–782; it reads LDLRGYRYED…GFGVTVATLK (76 aa).

Belongs to the DNA mismatch repair MutS family. MutS2 subfamily. In terms of assembly, homodimer. Binds to stalled ribosomes, contacting rRNA.

In terms of biological role, endonuclease that is involved in the suppression of homologous recombination and thus may have a key role in the control of bacterial genetic diversity. Acts as a ribosome collision sensor, splitting the ribosome into its 2 subunits. Detects stalled/collided 70S ribosomes which it binds and splits by an ATP-hydrolysis driven conformational change. Acts upstream of the ribosome quality control system (RQC), a ribosome-associated complex that mediates the extraction of incompletely synthesized nascent chains from stalled ribosomes and their subsequent degradation. Probably generates substrates for RQC. This is Endonuclease MutS2 from Staphylococcus aureus (strain MRSA252).